The following is a 345-amino-acid chain: Phosphate acyltransferase (345 aa).

Belongs to the PlsX family. As to quaternary structure, homodimer. Probably interacts with PlsY.

The protein localises to the cytoplasm. The catalysed reaction is a fatty acyl-[ACP] + phosphate = an acyl phosphate + holo-[ACP]. It functions in the pathway lipid metabolism; phospholipid metabolism. In terms of biological role, catalyzes the reversible formation of acyl-phosphate (acyl-PO(4)) from acyl-[acyl-carrier-protein] (acyl-ACP). This enzyme utilizes acyl-ACP as fatty acyl donor, but not acyl-CoA. The chain is Phosphate acyltransferase from Photorhabdus laumondii subsp. laumondii (strain DSM 15139 / CIP 105565 / TT01) (Photorhabdus luminescens subsp. laumondii).